Here is a 631-residue protein sequence, read N- to C-terminus: Chaperone protein HtpG (631 aa).

An a; substrate-binding region spans residues 1–339 (MSAQKETLGF…SNDLPLNVSR (339 aa)). Residues 340-556 (EILQESKDID…EHDMSAHLER (217 aa)) are b. The c stretch occupies residues 557–631 (MLKAAGQKIE…INKLMLELSV (75 aa)).

Belongs to the heat shock protein 90 family. In terms of assembly, homodimer.

The protein localises to the cytoplasm. Functionally, molecular chaperone. Has ATPase activity. The protein is Chaperone protein HtpG of Chromobacterium violaceum (strain ATCC 12472 / DSM 30191 / JCM 1249 / CCUG 213 / NBRC 12614 / NCIMB 9131 / NCTC 9757 / MK).